A 243-amino-acid chain; its full sequence is Transmembrane protein 174 (243 aa).

2 helical membrane-spanning segments follow: residues 40–60 (LLFS…MGWI) and 73–93 (LLGP…VCKF).

As to quaternary structure, interacts with SLC34A1; regulates SLC34A1 internalization by PTH and FGF23. As to expression, kidney specific. Expressed in renal primary proximal tubule cells.

It is found in the endoplasmic reticulum membrane. The protein resides in the apical cell membrane. Functionally, regulator of plasma phosphate homeostasis. Decreases serum inorganic phosphate (Pi) uptake by regulating the sodium-phosphate cotransporter SLC34A1 trafficking by PTH and FGF23 in the kidney. The chain is Transmembrane protein 174 (Tmem174) from Mus musculus (Mouse).